We begin with the raw amino-acid sequence, 361 residues long: UDP-3-O-acylglucosamine N-acyltransferase (361 aa).

Catalysis depends on histidine 264, which acts as the Proton acceptor.

Belongs to the transferase hexapeptide repeat family. LpxD subfamily. In terms of assembly, homotrimer.

The enzyme catalyses a UDP-3-O-[(3R)-3-hydroxyacyl]-alpha-D-glucosamine + a (3R)-hydroxyacyl-[ACP] = a UDP-2-N,3-O-bis[(3R)-3-hydroxyacyl]-alpha-D-glucosamine + holo-[ACP] + H(+). It functions in the pathway bacterial outer membrane biogenesis; LPS lipid A biosynthesis. Catalyzes the N-acylation of UDP-3-O-acylglucosamine using 3-hydroxyacyl-ACP as the acyl donor. Is involved in the biosynthesis of lipid A, a phosphorylated glycolipid that anchors the lipopolysaccharide to the outer membrane of the cell. This is UDP-3-O-acylglucosamine N-acyltransferase from Bordetella avium (strain 197N).